We begin with the raw amino-acid sequence, 488 residues long: Proline--tRNA ligase (488 aa).

Belongs to the class-II aminoacyl-tRNA synthetase family. ProS type 3 subfamily. In terms of assembly, homodimer.

Its subcellular location is the cytoplasm. The enzyme catalyses tRNA(Pro) + L-proline + ATP = L-prolyl-tRNA(Pro) + AMP + diphosphate. In terms of biological role, catalyzes the attachment of proline to tRNA(Pro) in a two-step reaction: proline is first activated by ATP to form Pro-AMP and then transferred to the acceptor end of tRNA(Pro). The sequence is that of Proline--tRNA ligase from Pyrobaculum aerophilum (strain ATCC 51768 / DSM 7523 / JCM 9630 / CIP 104966 / NBRC 100827 / IM2).